Consider the following 384-residue polypeptide: Methylthioribose-1-phosphate isomerase (384 aa).

Catalysis depends on aspartate 255, which acts as the Proton donor.

The protein belongs to the eIF-2B alpha/beta/delta subunits family. MtnA subfamily.

The protein resides in the cytoplasm. It localises to the nucleus. The catalysed reaction is 5-(methylsulfanyl)-alpha-D-ribose 1-phosphate = 5-(methylsulfanyl)-D-ribulose 1-phosphate. Its pathway is amino-acid biosynthesis; L-methionine biosynthesis via salvage pathway; L-methionine from S-methyl-5-thio-alpha-D-ribose 1-phosphate: step 1/6. Its function is as follows. Catalyzes the interconversion of methylthioribose-1-phosphate (MTR-1-P) into methylthioribulose-1-phosphate (MTRu-1-P). The sequence is that of Methylthioribose-1-phosphate isomerase (mri1) from Talaromyces marneffei (strain ATCC 18224 / CBS 334.59 / QM 7333) (Penicillium marneffei).